We begin with the raw amino-acid sequence, 393 residues long: S-adenosylmethionine synthase (393 aa).

A Mg(2+)-binding site is contributed by Glu9. His15 lines the ATP pocket. Glu43 contributes to the K(+) binding site. Positions 56 and 99 each coordinate L-methionine. ATP is bound by residues 167–169 (HGK), 235–238 (SGRF), Asp246, 252–253 (RK), Ala269, Lys273, and Lys277. Asp246 provides a ligand contact to L-methionine. Lys277 is a binding site for L-methionine.

Belongs to the AdoMet synthase family. Homotetramer. Requires Mn(2+) as cofactor. Mg(2+) serves as cofactor. The cofactor is Co(2+). K(+) is required as a cofactor. In terms of tissue distribution, root.

Its subcellular location is the cytoplasm. The enzyme catalyses L-methionine + ATP + H2O = S-adenosyl-L-methionine + phosphate + diphosphate. It participates in amino-acid biosynthesis; S-adenosyl-L-methionine biosynthesis; S-adenosyl-L-methionine from L-methionine: step 1/1. In terms of biological role, catalyzes the formation of S-adenosylmethionine from methionine and ATP. The reaction comprises two steps that are both catalyzed by the same enzyme: formation of S-adenosylmethionine (AdoMet) and triphosphate, and subsequent hydrolysis of the triphosphate. The protein is S-adenosylmethionine synthase (METK) of Pinus banksiana (Jack pine).